A 1567-amino-acid polypeptide reads, in one-letter code: ABC multidrug transporter MDR1 (1567 aa).

The segment covering 1-11 (MASQPPQPPSG) has biased composition (pro residues). Residues 1-37 (MASQPPQPPSGQPDTQYEEYQSEVITETTNRPTPAAD) form a disordered region. A compositionally biased stretch (polar residues) spans 22–32 (SEVITETTNRP). N-linked (GlcNAc...) asparagine glycosylation is found at N149, N157, and N356. The ABC transporter 1 domain maps to 167 to 432 (VQYQDTFLSP…FEEMGWYCPP (266 aa)). A run of 6 helical transmembrane segments spans residues 543–563 (STIA…SLFF), 571–591 (GFFA…LMSI), 636–656 (IPIK…LGGL), 661–681 (AKFF…SAIF), 691–711 (IPQA…YTGF), and 798–818 (LGIL…VSEL). 3 N-linked (GlcNAc...) asparagine glycosylation sites follow: N819, N895, and N912. The ABC transporter 2 domain occupies 891–1134 (FTWRNVTYDI…LLNYFETHGA (244 aa)). ATP is bound at residue 927–934 (GVSGAGKT). The disordered stretch occupies residues 1172–1202 (ESRHVQQELDRIQSETSKRNEGHGQSAEKEP). The chain crosses the membrane as a helical span at residues 1231–1251 (IWGKLLLGLASALFIGFSFFL). A glycan (N-linked (GlcNAc...) asparagine) is linked at N1253. Transmembrane regions (helical) follow at residues 1257–1277 (AGLQ…SSLV), 1305–1325 (VFLL…GIIA), 1345–1365 (ILLL…QMII), 1372–1392 (ETAG…NGVL), and 1498–1518 (GIGW…YYLI).

Belongs to the ABC transporter superfamily. ABCG family. PDR (TC 3.A.1.205) subfamily.

It is found in the cell membrane. It catalyses the reaction voriconazole(in) + ATP + H2O = voriconazole(out) + ADP + phosphate + H(+). The enzyme catalyses fluconazole(in) + ATP + H2O = fluconazole(out) + ADP + phosphate + H(+). It carries out the reaction (R)-miconazole(in) + ATP + H2O = (R)-miconazole(out) + ADP + phosphate + H(+). The catalysed reaction is (S)-miconazole(in) + ATP + H2O = (S)-miconazole(out) + ADP + phosphate + H(+). Pleiotropic ABC efflux transporter that may be involved in the modulation susceptibility to a wide range of unrelated cytotoxic compounds, including ethidium bromide, ketoconazole, cycloheximide, fluconazole, griseofulvin, imazalil and itraconazole. The protein is ABC multidrug transporter MDR1 of Trichophyton interdigitale (strain MR816).